We begin with the raw amino-acid sequence, 369 residues long: Isopentenyl-diphosphate delta-isomerase (369 aa).

9 to 10 (RK) serves as a coordination point for substrate. FMN is bound by residues Thr-65, 66–68 (GMT), Ser-96, and Asn-125. Residue 96–98 (SQR) participates in substrate binding. Residue Gln-160 coordinates substrate. Glu-161 is a binding site for Mg(2+). Residues Lys-193, Ser-218, Thr-223, 275-277 (GVR), and 296-297 (AL) contribute to the FMN site.

The protein belongs to the IPP isomerase type 2 family. In terms of assembly, homooctamer. Dimer of tetramers. Requires FMN as cofactor. NADPH is required as a cofactor. It depends on Mg(2+) as a cofactor.

The protein resides in the cytoplasm. The catalysed reaction is isopentenyl diphosphate = dimethylallyl diphosphate. In terms of biological role, involved in the biosynthesis of isoprenoids. Catalyzes the 1,3-allylic rearrangement of the homoallylic substrate isopentenyl (IPP) to its allylic isomer, dimethylallyl diphosphate (DMAPP). The protein is Isopentenyl-diphosphate delta-isomerase of Sulfurisphaera tokodaii (strain DSM 16993 / JCM 10545 / NBRC 100140 / 7) (Sulfolobus tokodaii).